Here is a 1420-residue protein sequence, read N- to C-terminus: MKALLDLFKQTQGDEQFDVIKIGLASPEKIRSWSFGEVRKPETINYRTFKPERDGLFCAKIFGPTKDYECLCGKYKRLKFRGVICEKCGVEVTLAKVRRERMGHIELAAPVAHIWFLKSLPSRLGMVLDMTLRDIERVLYFEAYVVVDPGMTPEGAMKRGQIMSEDEYIAKTEEYGDGAFTAIMGAEGIRDLLRGIDIDREVETIRADLKATGSDAKIKKYAKRLKVLEAFQTSGIKPDWMIMEVLPVLPPELRPLVPLDGGRFATSDLNDLYRRVINRNNRLKRLLELRAPEIIVRNEKRMLQEAVDSLLDNGRRGKAMTGANKRPLKSLAEMIKGKSGRFRQNLLGKRVDYSGRSVIVVGPTLKLHQCGLPKLMALELFKPFIFNKLETLGIATTIKAAKKEVESQTPIVWDILEEVIREHPIMLNRAPTLHRLGIQAFEPMLIEGKAIQLHPLVCAAFNADFDGDQMAVHVPLSLEAQMEARTLMLASNNVLFPANGEPSIVPSQDVVLGLYYATRDKINGKGEGMVFANIAEVIRAHEAGQVELASRVAVRITEFEIVDKKAEGDARFAEKTKIYQTSVGRAILSEILPKGMTFEEINKPLKKKEISRLINTSFRKCGLRETVIFADRLLQSGFRLATNAGISVAIDDMLIPTSKERIITEATNKVKEYDKQFMSGLVTNQERYNNVVDIWGAAGDQVGKAMMDELSHVDVLDRNSKTVRQESFNSIYMMADSGARGSAAQIRQLAGMRGLMAKPDGSIIETPITANFREGLNVLQYFISTHGARKGLADTALKTANSGYLTRRLCDVTQDLVVIEDDCGATSGVTMKALVEGGEIIEALRDRILGRVCIGDIVHPDTQEVIVANDTLLDEDHVDQIVALGIDEVKVRTVLSCLTRFGLCAKCYGRDLGRGGLVNVGEAVGVIAAQSIGEPGTQLTMRTFHIGGAASRALVASNIEAKSNGALKFSGTMRIVKNAKGEQIVISRSGEALIIDDNGRERERHKVPYGATLLFKEDAAVKAGASLATWDPLTRPIISEYAGIARFDNVEEGVTVAKQVDEVTGLSTLVVIDGKRRSAASKGVRPMINLVDDKGGEVMIAGTDHPVNIGLQVGALITVKDGQKVEVGEVLARIPIESQKTRDITGGLPRVAELFEARSPKDAAVLAKVTGTVSFGKETKGKQRLVITDMDGEANEFLIPKEKQVLVHDGQVVNKGEMIVEGPADPHDILTLRGIEELAIYIVDEVQDVYRLQGVKINDKHIEVIVRQMLRRVQITDGGDTAYITGEQVERSKLYDANDLVIAAGKRPAQFENVLLGITKASLSTDSFISAASFQETTRVLTEAAIMGKTDTLRGLKENVIIGRLIPAGTGLSYRRARKVREQFERDRAQMIAAEEEAIANTPVEIEAEVIAPAGEADPS.

Zn(2+)-binding residues include cysteine 70, cysteine 72, cysteine 85, and cysteine 88. The Mg(2+) site is built by aspartate 464, aspartate 466, and aspartate 468. Residues cysteine 823, cysteine 897, cysteine 904, and cysteine 907 each coordinate Zn(2+).

It belongs to the RNA polymerase beta' chain family. As to quaternary structure, the RNAP catalytic core consists of 2 alpha, 1 beta, 1 beta' and 1 omega subunit. When a sigma factor is associated with the core the holoenzyme is formed, which can initiate transcription. It depends on Mg(2+) as a cofactor. The cofactor is Zn(2+).

It carries out the reaction RNA(n) + a ribonucleoside 5'-triphosphate = RNA(n+1) + diphosphate. Functionally, DNA-dependent RNA polymerase catalyzes the transcription of DNA into RNA using the four ribonucleoside triphosphates as substrates. The protein is DNA-directed RNA polymerase subunit beta' of Polynucleobacter asymbioticus (strain DSM 18221 / CIP 109841 / QLW-P1DMWA-1) (Polynucleobacter necessarius subsp. asymbioticus).